Consider the following 517-residue polypeptide: Protein MGF 505-2R (517 aa).

Belongs to the asfivirus MGF 505 family.

Functionally, plays a role in virus cell tropism, and may be required for efficient virus replication in macrophages. In African swine fever virus (isolate Warthog/Namibia/Wart80/1980) (ASFV), this protein is Protein MGF 505-2R.